A 254-amino-acid chain; its full sequence is Hydroxypyruvate/pyruvate aldolase (254 aa).

H47 acts as the Proton acceptor in catalysis. Residues E151 and D177 each coordinate a divalent metal cation.

The protein belongs to the HpcH/HpaI aldolase family. It depends on a divalent metal cation as a cofactor.

It carries out the reaction D-glyceraldehyde + pyruvate = 2-dehydro-3-deoxy-L-galactonate. Its function is as follows. Aldolase which can catalyze in vitro the aldolisation reaction between hydroxypyruvate (HPA) or pyruvate (PA) and D-glyceraldehyde (D-GA). The condensation of pyruvate and D-glyceraldehyde produces 2-dehydro-3-deoxy-L-galactonate as the major product. Has weak activity with hydroxypyruvate and D-glyceraldehyde. This Chromohalobacter salexigens (strain ATCC BAA-138 / DSM 3043 / CIP 106854 / NCIMB 13768 / 1H11) protein is Hydroxypyruvate/pyruvate aldolase.